The sequence spans 247 residues: 3-deoxy-manno-octulosonate cytidylyltransferase (247 aa).

Belongs to the KdsB family.

Its subcellular location is the cytoplasm. It carries out the reaction 3-deoxy-alpha-D-manno-oct-2-ulosonate + CTP = CMP-3-deoxy-beta-D-manno-octulosonate + diphosphate. Its pathway is nucleotide-sugar biosynthesis; CMP-3-deoxy-D-manno-octulosonate biosynthesis; CMP-3-deoxy-D-manno-octulosonate from 3-deoxy-D-manno-octulosonate and CTP: step 1/1. It functions in the pathway bacterial outer membrane biogenesis; lipopolysaccharide biosynthesis. Its function is as follows. Activates KDO (a required 8-carbon sugar) for incorporation into bacterial lipopolysaccharide in Gram-negative bacteria. In Methylobacterium radiotolerans (strain ATCC 27329 / DSM 1819 / JCM 2831 / NBRC 15690 / NCIMB 10815 / 0-1), this protein is 3-deoxy-manno-octulosonate cytidylyltransferase.